Reading from the N-terminus, the 73-residue chain is Translation initiation factor IF-1 (73 aa).

One can recognise an S1-like domain in the interval 1–73 (MAKKDGAIEV…SRGRIVYRYK (73 aa)).

This sequence belongs to the IF-1 family. As to quaternary structure, component of the 30S ribosomal translation pre-initiation complex which assembles on the 30S ribosome in the order IF-2 and IF-3, IF-1 and N-formylmethionyl-tRNA(fMet); mRNA recruitment can occur at any time during PIC assembly.

It localises to the cytoplasm. In terms of biological role, one of the essential components for the initiation of protein synthesis. Stabilizes the binding of IF-2 and IF-3 on the 30S subunit to which N-formylmethionyl-tRNA(fMet) subsequently binds. Helps modulate mRNA selection, yielding the 30S pre-initiation complex (PIC). Upon addition of the 50S ribosomal subunit IF-1, IF-2 and IF-3 are released leaving the mature 70S translation initiation complex. This Mycolicibacterium smegmatis (strain ATCC 700084 / mc(2)155) (Mycobacterium smegmatis) protein is Translation initiation factor IF-1.